The following is a 506-amino-acid chain: Light-independent protochlorophyllide reductase subunit B (506 aa).

Asp36 contacts [4Fe-4S] cluster. Asp279 acts as the Proton donor in catalysis. 414–415 is a substrate binding site; sequence GL.

Belongs to the ChlB/BchB/BchZ family. In terms of assembly, protochlorophyllide reductase is composed of three subunits; BchL, BchN and BchB. Forms a heterotetramer of two BchB and two BchN subunits. Requires [4Fe-4S] cluster as cofactor.

The enzyme catalyses chlorophyllide a + oxidized 2[4Fe-4S]-[ferredoxin] + 2 ADP + 2 phosphate = protochlorophyllide a + reduced 2[4Fe-4S]-[ferredoxin] + 2 ATP + 2 H2O. The protein operates within porphyrin-containing compound metabolism; bacteriochlorophyll biosynthesis (light-independent). Component of the dark-operative protochlorophyllide reductase (DPOR) that uses Mg-ATP and reduced ferredoxin to reduce ring D of protochlorophyllide (Pchlide) to form chlorophyllide a (Chlide). This reaction is light-independent. The NB-protein (BchN-BchB) is the catalytic component of the complex. This Methylobacterium sp. (strain 4-46) protein is Light-independent protochlorophyllide reductase subunit B.